The following is a 336-amino-acid chain: Ferredoxin--NADP reductase (336 aa).

FAD is bound by residues Glu34, Gln42, Tyr47, Val87, Phe121, Asp286, and Ser326.

This sequence belongs to the ferredoxin--NADP reductase type 2 family. Homodimer. It depends on FAD as a cofactor.

It carries out the reaction 2 reduced [2Fe-2S]-[ferredoxin] + NADP(+) + H(+) = 2 oxidized [2Fe-2S]-[ferredoxin] + NADPH. This Leuconostoc mesenteroides subsp. mesenteroides (strain ATCC 8293 / DSM 20343 / BCRC 11652 / CCM 1803 / JCM 6124 / NCDO 523 / NBRC 100496 / NCIMB 8023 / NCTC 12954 / NRRL B-1118 / 37Y) protein is Ferredoxin--NADP reductase.